Here is a 993-residue protein sequence, read N- to C-terminus: UPF0182 protein Sare_4110 (993 aa).

7 helical membrane passes run 18 to 38, 61 to 81, 110 to 130, 171 to 191, 209 to 229, 260 to 280, and 283 to 303; these read IGVL…VQAW, LLLF…NLWL, LGTW…LSAQ, GVAF…HYVF, AHLS…YVLD, ILAY…NAWM, and LVWP…IGGI. Disordered regions lie at residues 892–937 and 974–993; these read QGEK…ADAA and EQAA…SPGG. Over residues 900-929 the composition is skewed to pro residues; sequence STPPPSGETPAPTPTPTPTPSSPSVTPPPV. A compositionally biased stretch (low complexity) spans 976-993; the sequence is AAGPGSAATPTGSPSPGG.

The protein belongs to the UPF0182 family.

The protein localises to the cell membrane. The polypeptide is UPF0182 protein Sare_4110 (Salinispora arenicola (strain CNS-205)).